A 235-amino-acid chain; its full sequence is Probable transcriptional regulatory protein JJD26997_0557 (235 aa).

Belongs to the TACO1 family.

The protein localises to the cytoplasm. This chain is Probable transcriptional regulatory protein JJD26997_0557, found in Campylobacter jejuni subsp. doylei (strain ATCC BAA-1458 / RM4099 / 269.97).